Here is a 309-residue protein sequence, read N- to C-terminus: Ribonuclease Z (309 aa).

Positions 64, 66, 68, 69, 141, 209, and 267 each coordinate Zn(2+). Catalysis depends on D68, which acts as the Proton acceptor.

Belongs to the RNase Z family. Homodimer. It depends on Zn(2+) as a cofactor.

It catalyses the reaction Endonucleolytic cleavage of RNA, removing extra 3' nucleotides from tRNA precursor, generating 3' termini of tRNAs. A 3'-hydroxy group is left at the tRNA terminus and a 5'-phosphoryl group is left at the trailer molecule.. Its function is as follows. Zinc phosphodiesterase, which displays some tRNA 3'-processing endonuclease activity. Probably involved in tRNA maturation, by removing a 3'-trailer from precursor tRNA. This chain is Ribonuclease Z, found in Picrophilus torridus (strain ATCC 700027 / DSM 9790 / JCM 10055 / NBRC 100828 / KAW 2/3).